Consider the following 228-residue polypeptide: Orotate phosphoribosyltransferase (228 aa).

Residues R107, K108, K111, and 133-141 (EDLTTDGGS) each bind 5-phospho-alpha-D-ribose 1-diphosphate. T137 contacts orotate.

It belongs to the purine/pyrimidine phosphoribosyltransferase family. PyrE subfamily. As to quaternary structure, homodimer. Mg(2+) serves as cofactor.

The catalysed reaction is orotidine 5'-phosphate + diphosphate = orotate + 5-phospho-alpha-D-ribose 1-diphosphate. Its pathway is pyrimidine metabolism; UMP biosynthesis via de novo pathway; UMP from orotate: step 1/2. Its function is as follows. Catalyzes the transfer of a ribosyl phosphate group from 5-phosphoribose 1-diphosphate to orotate, leading to the formation of orotidine monophosphate (OMP). The polypeptide is Orotate phosphoribosyltransferase (Jannaschia sp. (strain CCS1)).